A 278-amino-acid chain; its full sequence is Pantothenate synthetase (278 aa).

30–37 (MGFLHEGH) contributes to the ATP binding site. The active-site Proton donor is histidine 37. (R)-pantoate is bound at residue glutamine 61. Residue glutamine 61 participates in beta-alanine binding. 147–150 (GQKD) contributes to the ATP binding site. Glutamine 153 is a (R)-pantoate binding site. ATP contacts are provided by residues valine 176 and 184 to 187 (LSSR).

Belongs to the pantothenate synthetase family. In terms of assembly, homodimer.

Its subcellular location is the cytoplasm. The enzyme catalyses (R)-pantoate + beta-alanine + ATP = (R)-pantothenate + AMP + diphosphate + H(+). It participates in cofactor biosynthesis; (R)-pantothenate biosynthesis; (R)-pantothenate from (R)-pantoate and beta-alanine: step 1/1. In terms of biological role, catalyzes the condensation of pantoate with beta-alanine in an ATP-dependent reaction via a pantoyl-adenylate intermediate. In Thermosipho africanus (strain TCF52B), this protein is Pantothenate synthetase.